An 89-amino-acid chain; its full sequence is UPF0175 protein APE_0276a (89 aa).

Belongs to the UPF0175 family.

This is UPF0175 protein APE_0276a from Aeropyrum pernix (strain ATCC 700893 / DSM 11879 / JCM 9820 / NBRC 100138 / K1).